A 403-amino-acid chain; its full sequence is CCA-adding enzyme (403 aa).

Positions 32 and 35 each coordinate ATP. Residues glycine 32 and arginine 35 each coordinate CTP. Mg(2+)-binding residues include aspartate 45 and aspartate 47. ATP-binding residues include arginine 116, aspartate 159, arginine 162, arginine 165, and arginine 168. Positions 116, 159, 162, 165, and 168 each coordinate CTP.

Belongs to the tRNA nucleotidyltransferase/poly(A) polymerase family. Bacterial CCA-adding enzyme type 3 subfamily. In terms of assembly, homodimer. Mg(2+) is required as a cofactor.

The catalysed reaction is a tRNA precursor + 2 CTP + ATP = a tRNA with a 3' CCA end + 3 diphosphate. It carries out the reaction a tRNA with a 3' CCA end + 2 CTP + ATP = a tRNA with a 3' CCACCA end + 3 diphosphate. Its function is as follows. Catalyzes the addition and repair of the essential 3'-terminal CCA sequence in tRNAs without using a nucleic acid template. Adds these three nucleotides in the order of C, C, and A to the tRNA nucleotide-73, using CTP and ATP as substrates and producing inorganic pyrophosphate. tRNA 3'-terminal CCA addition is required both for tRNA processing and repair. Also involved in tRNA surveillance by mediating tandem CCA addition to generate a CCACCA at the 3' terminus of unstable tRNAs. While stable tRNAs receive only 3'-terminal CCA, unstable tRNAs are marked with CCACCA and rapidly degraded. The chain is CCA-adding enzyme from Streptococcus suis (strain 98HAH33).